We begin with the raw amino-acid sequence, 561 residues long: Dihydroxy-acid dehydratase (561 aa).

Cysteine 50 contributes to the [2Fe-2S] cluster binding site. Residue aspartate 82 participates in Mg(2+) binding. A [2Fe-2S] cluster-binding site is contributed by cysteine 123. Residues aspartate 124 and lysine 125 each coordinate Mg(2+). Lysine 125 bears the N6-carboxylysine mark. Residue cysteine 195 coordinates [2Fe-2S] cluster. Mg(2+) is bound at residue glutamate 447. The Proton acceptor role is filled by serine 473.

This sequence belongs to the IlvD/Edd family. As to quaternary structure, homodimer. [2Fe-2S] cluster is required as a cofactor. The cofactor is Mg(2+).

It catalyses the reaction (2R)-2,3-dihydroxy-3-methylbutanoate = 3-methyl-2-oxobutanoate + H2O. The catalysed reaction is (2R,3R)-2,3-dihydroxy-3-methylpentanoate = (S)-3-methyl-2-oxopentanoate + H2O. Its pathway is amino-acid biosynthesis; L-isoleucine biosynthesis; L-isoleucine from 2-oxobutanoate: step 3/4. The protein operates within amino-acid biosynthesis; L-valine biosynthesis; L-valine from pyruvate: step 3/4. Its function is as follows. Functions in the biosynthesis of branched-chain amino acids. Catalyzes the dehydration of (2R,3R)-2,3-dihydroxy-3-methylpentanoate (2,3-dihydroxy-3-methylvalerate) into 2-oxo-3-methylpentanoate (2-oxo-3-methylvalerate) and of (2R)-2,3-dihydroxy-3-methylbutanoate (2,3-dihydroxyisovalerate) into 2-oxo-3-methylbutanoate (2-oxoisovalerate), the penultimate precursor to L-isoleucine and L-valine, respectively. The chain is Dihydroxy-acid dehydratase from Acaryochloris marina (strain MBIC 11017).